The primary structure comprises 493 residues: EGF-containing fibulin-like extracellular matrix protein 1 (493 aa).

Residues 1-17 form the signal peptide; that stretch reads MLQTVFLTMLTLALVKS. Residues 26–71 form the EGF-like 1; atypical domain; that stretch reads YTQCTDGYEWDPVRQQCKDIDECDIVPDACKGGMKCVNHYGGYLCL. Residues 173-213 enclose the EGF-like 2; calcium-binding domain; sequence DIDECTSGTHNCRLDQVCINLRGSFTCHCLPGYQKRGEQCV. 15 disulfides stabilise this stretch: Cys177–Cys190, Cys184–Cys199, Cys201–Cys212, Cys218–Cys228, Cys224–Cys237, Cys239–Cys252, Cys258–Cys268, Cys264–Cys277, Cys279–Cys292, Cys298–Cys309, Cys305–Cys318, Cys320–Cys332, Cys338–Cys350, Cys344–Cys359, and Cys365–Cys377. The 40-residue stretch at 214-253 folds into the EGF-like 3; calcium-binding domain; it reads DIDECSVPPYCHQGCVNTPGSFYCQCNPGFQLAANNYTCV. N-linked (GlcNAc...) asparagine glycosylation is present at Asn249. The 40-residue stretch at 254 to 293 folds into the EGF-like 4; calcium-binding domain; sequence DINECDASNQCAQQCYNILGSFICQCNQGYELSSDRLNCE. Residues 259 to 493 form a mediates interaction with TIMP3 region; it reads DASNQCAQQC…LTIIVGPFSF (235 aa). The region spanning 294 to 333 is the EGF-like 5; calcium-binding domain; the sequence is DIDECRTSSYLCQYQCVNEPGKFSCMCPQGYQVVRSRTCQ. Residues 334–378 enclose the EGF-like 6; calcium-binding domain; it reads DINECETTNECREDEMCWNYHGGFRCYPQNPCQDPYVLTSENRCV.

It belongs to the fibulin family. As to quaternary structure, interacts with ECM1. Interacts with TIMP3. In terms of tissue distribution, expressed by olfactory ensheathing cells (at protein level). Detected in lung, intestine and kidney.

It localises to the secreted. The protein localises to the extracellular space. It is found in the extracellular matrix. In terms of biological role, binds EGFR, the EGF receptor, inducing EGFR autophosphorylation and the activation of downstream signaling pathways. May play a role in cell adhesion and migration. May function as a negative regulator of chondrocyte differentiation. In the olfactory epithelium, it may regulate glial cell migration, differentiation and the ability of glial cells to support neuronal neurite outgrowth. The polypeptide is EGF-containing fibulin-like extracellular matrix protein 1 (Efemp1) (Rattus norvegicus (Rat)).